Consider the following 184-residue polypeptide: Tumor necrosis factor receptor superfamily member 17 (184 aa).

Residues 1–54 lie on the Extracellular side of the membrane; sequence MLQMAGQCSQNEYFDSLLHACIPCQLRCSSNTPPLTCQRYCNASVTNSVKGTNA. The stretch at 7–41 is one TNFR-Cys repeat; sequence QCSQNEYFDSLLHACIPCQLRCSSNTPPLTCQRYC. 3 disulfide bridges follow: Cys-8-Cys-21, Cys-24-Cys-37, and Cys-28-Cys-41. A helical; Signal-anchor for type III membrane protein membrane pass occupies residues 55–77; sequence ILWTCLGLSLIISLAVFVLMFLL. At 78–184 the chain is on the cytoplasmic side; the sequence is RKINSEPLKD…TEIEKSISAR (107 aa).

As to quaternary structure, associates with TRAF1, TRAF2, TRAF3, TRAF5 and TRAF6. As to expression, expressed in mature B-cells, but not in T-cells or monocytes.

Its subcellular location is the cell membrane. The protein localises to the endomembrane system. Functionally, receptor for TNFSF13B/BLyS/BAFF and TNFSF13/APRIL. Promotes B-cell survival and plays a role in the regulation of humoral immunity. Activates NF-kappa-B and JNK. This chain is Tumor necrosis factor receptor superfamily member 17 (TNFRSF17), found in Homo sapiens (Human).